Consider the following 121-residue polypeptide: Protein TCL1B5 (121 aa).

This sequence belongs to the TCL1 family.

The polypeptide is Protein TCL1B5 (Tcl1b5) (Mus musculus (Mouse)).